The primary structure comprises 474 residues: UDP-N-acetylmuramate--L-alanine ligase (474 aa).

119 to 125 (GTHGKTT) is an ATP binding site.

Belongs to the MurCDEF family.

Its subcellular location is the cytoplasm. It catalyses the reaction UDP-N-acetyl-alpha-D-muramate + L-alanine + ATP = UDP-N-acetyl-alpha-D-muramoyl-L-alanine + ADP + phosphate + H(+). It participates in cell wall biogenesis; peptidoglycan biosynthesis. Cell wall formation. The polypeptide is UDP-N-acetylmuramate--L-alanine ligase (Jannaschia sp. (strain CCS1)).